The chain runs to 321 residues: Gap junction delta-2 protein (321 aa).

The Cytoplasmic segment spans residues 1-19; that stretch reads MGEWTILERLLEAAVQQHS. The chain crosses the membrane as a helical span at residues 20-42; it reads TMIGRILLTVVVIFRILIVAIVG. Topologically, residues 43–75 are extracellular; the sequence is ETVYDDEQTMFVCNTLQPGCNQACYDRAFPISH. A helical membrane pass occupies residues 76-98; that stretch reads IRYWVFQIIMVCTPSLCFITYSV. Residues 99 to 197 are Cytoplasmic-facing; that stretch reads HQSAKQRERR…KLRRQEGISR (99 aa). The disordered stretch occupies residues 120–141; it reads PAESIGGPGGTGGGGSGGSKRE. Gly residues predominate over residues 125-137; sequence GGPGGTGGGGSGG. A helical membrane pass occupies residues 198–220; that stretch reads FYIIQVVFRNALEIGFLVGQYFL. At 221–252 the chain is on the extracellular side; the sequence is YGFSVPGLYECNRYPCIKEVECYVSRPTEKTV. Residues 253 to 275 form a helical membrane-spanning segment; that stretch reads FLVFMFAVSGICVVLNLAELNHL. The Cytoplasmic portion of the chain corresponds to 276 to 321; the sequence is GWRKIKLAVRGAQAKRKSVYEIRNKDLPRVSVPNFGRTQSSDSAYV.

Belongs to the connexin family. Delta-type subfamily. In terms of assembly, a connexon is composed of a hexamer of connexins. In terms of tissue distribution, highly expressed in neurons.

It is found in the cell membrane. The protein resides in the cell junction. Its subcellular location is the gap junction. Its function is as follows. One gap junction consists of a cluster of closely packed pairs of transmembrane channels, the connexons, through which materials of low MW diffuse from one cell to a neighboring cell. This chain is Gap junction delta-2 protein (Gjd2), found in Mus musculus (Mouse).